A 267-amino-acid chain; its full sequence is 5'-nucleotidase SurE (267 aa).

Residues Asp9, Asp10, Ser40, and Asn97 each contribute to the a divalent metal cation site.

The protein belongs to the SurE nucleotidase family. Requires a divalent metal cation as cofactor.

The protein localises to the cytoplasm. It carries out the reaction a ribonucleoside 5'-phosphate + H2O = a ribonucleoside + phosphate. Nucleotidase that shows phosphatase activity on nucleoside 5'-monophosphates. In Helicobacter pylori (strain P12), this protein is 5'-nucleotidase SurE.